We begin with the raw amino-acid sequence, 70 residues long: ATP synthase subunit c (70 aa).

2 helical membrane passes run 5–25 and 47–67; these read AAAIAIGLAALGAGIGNGLIV and FIGVALVEAIPIIAVVIAFMV.

The protein belongs to the ATPase C chain family. F-type ATPases have 2 components, F(1) - the catalytic core - and F(0) - the membrane proton channel. F(1) has five subunits: alpha(3), beta(3), gamma(1), delta(1), epsilon(1). F(0) has three main subunits: a(1), b(2) and c(10-14). The alpha and beta chains form an alternating ring which encloses part of the gamma chain. F(1) is attached to F(0) by a central stalk formed by the gamma and epsilon chains, while a peripheral stalk is formed by the delta and b chains.

The protein resides in the cell membrane. F(1)F(0) ATP synthase produces ATP from ADP in the presence of a proton or sodium gradient. F-type ATPases consist of two structural domains, F(1) containing the extramembraneous catalytic core and F(0) containing the membrane proton channel, linked together by a central stalk and a peripheral stalk. During catalysis, ATP synthesis in the catalytic domain of F(1) is coupled via a rotary mechanism of the central stalk subunits to proton translocation. In terms of biological role, key component of the F(0) channel; it plays a direct role in translocation across the membrane. A homomeric c-ring of between 10-14 subunits forms the central stalk rotor element with the F(1) delta and epsilon subunits. This chain is ATP synthase subunit c, found in Anoxybacillus flavithermus (strain DSM 21510 / WK1).